We begin with the raw amino-acid sequence, 243 residues long: uncharacterized protein (243 aa).

The GP-PDE domain maps to 2–240; the sequence is TKIFAHRGAS…DFPEKASALL (239 aa).

This is an uncharacterized protein from Bacillus subtilis (strain 168).